Consider the following 1035-residue polypeptide: POM121-like protein 2 (1035 aa).

6 disordered regions span residues 1-37 (MGSFLSKLELSPSSPAQVRTDLPERPTKRRPPQPLHQ), 177-213 (LFPESLDSKRRSPETRPSAFKPLMKNGTLTSFVPRPG), 286-343 (IKKE…LGYA), 415-508 (LGPL…QSTL), 754-791 (SPLGSSSRPPFPLSQGANPQPAFGATNGQKQGPSQPAL), and 972-1035 (NTPV…AYKK). The span at 27 to 37 (TKRRPPQPLHQ) shows a compositional bias: basic residues. A compositionally biased stretch (low complexity) spans 309 to 319 (GGSESSGQQNQ). Composition is skewed to polar residues over residues 320-330 (KIPQLPSSPEN), 420-431 (SPQSTGEATSVA), and 445-462 (GCSQSELLPGTSPDSKPT). Residues 464 to 481 (TFILLTPTSPTLPVTDTT) are compositionally biased toward low complexity. Positions 493-502 (PMPPDPPAPP) are enriched in pro residues. Over residues 1000–1016 (RGPFRSSASSFSIGAKS) the composition is skewed to low complexity. The segment covering 1017-1035 (KTPKNREKGHSRRHHAYKK) has biased composition (basic residues).

This sequence belongs to the POM121 family.

The sequence is that of POM121-like protein 2 (POM121L2) from Homo sapiens (Human).